The sequence spans 336 residues: Small ribosomal subunit protein uS9m (336 aa).

The segment at 32–81 (STTTTTTTTTTTTTSDEIPTTKPRFQSRFRRNQQPHQQQRSPYTSSQVTE) is disordered. Residues 33–45 (TTTTTTTTTTTTT) show a composition bias toward low complexity. Residues 65–81 (QPHQQQRSPYTSSQVTE) show a composition bias toward polar residues.

It belongs to the universal ribosomal protein uS9 family. Component of the mitochondrial small ribosomal subunit (mt-SSU).

It is found in the mitochondrion. In terms of biological role, component of the mitochondrial ribosome (mitoribosome), a dedicated translation machinery responsible for the synthesis of mitochondrial genome-encoded proteins, including at least some of the essential transmembrane subunits of the mitochondrial respiratory chain. The mitoribosomes are attached to the mitochondrial inner membrane and translation products are cotranslationally integrated into the membrane. The sequence is that of Small ribosomal subunit protein uS9m (MRPS9) from Candida albicans (strain SC5314 / ATCC MYA-2876) (Yeast).